Reading from the N-terminus, the 297-residue chain is N-acetylneuraminate lyase (297 aa).

The aceneuramate site is built by Ser47 and Thr48. Tyr137 serves as the catalytic Proton donor. Lys165 serves as the catalytic Schiff-base intermediate with substrate. Aceneuramate-binding residues include Thr167, Gly189, Asp191, Glu192, and Ser208.

This sequence belongs to the DapA family. NanA subfamily. Homotetramer.

It localises to the cytoplasm. It carries out the reaction aceneuramate = aldehydo-N-acetyl-D-mannosamine + pyruvate. The protein operates within amino-sugar metabolism; N-acetylneuraminate degradation; D-fructose 6-phosphate from N-acetylneuraminate: step 1/5. In terms of biological role, catalyzes the reversible aldol cleavage of N-acetylneuraminic acid (sialic acid; Neu5Ac) to form pyruvate and N-acetylmannosamine (ManNAc) via a Schiff base intermediate. This chain is N-acetylneuraminate lyase, found in Citrobacter koseri (strain ATCC BAA-895 / CDC 4225-83 / SGSC4696).